Here is a 235-residue protein sequence, read N- to C-terminus: Phosphoribosylaminoimidazole-succinocarboxamide synthase (235 aa).

The protein belongs to the SAICAR synthetase family.

It catalyses the reaction 5-amino-1-(5-phospho-D-ribosyl)imidazole-4-carboxylate + L-aspartate + ATP = (2S)-2-[5-amino-1-(5-phospho-beta-D-ribosyl)imidazole-4-carboxamido]succinate + ADP + phosphate + 2 H(+). It participates in purine metabolism; IMP biosynthesis via de novo pathway; 5-amino-1-(5-phospho-D-ribosyl)imidazole-4-carboxamide from 5-amino-1-(5-phospho-D-ribosyl)imidazole-4-carboxylate: step 1/2. In Streptococcus sanguinis (strain SK36), this protein is Phosphoribosylaminoimidazole-succinocarboxamide synthase.